The following is a 274-amino-acid chain: Large ribosomal subunit protein uL2cz/uL2cy (274 aa).

Positions 225-274 (PVDHPHGGGEGRAPIGRKKPVTPWGYPALGRRTRKRKKYSETLILRRRSK) are disordered.

Belongs to the universal ribosomal protein uL2 family. As to quaternary structure, part of the 50S ribosomal subunit.

Its subcellular location is the plastid. It localises to the chloroplast. This chain is Large ribosomal subunit protein uL2cz/uL2cy (rpl2-A), found in Crucihimalaya wallichii (Rock-cress).